The sequence spans 426 residues: 2-(3-amino-3-carboxypropyl)histidine synthase subunit 1 (426 aa).

Residues Cys133, Cys239, and Cys368 each coordinate [4Fe-4S] cluster.

Belongs to the DPH1/DPH2 family. DPH1 subfamily. In terms of assembly, component of the 2-(3-amino-3-carboxypropyl)histidine synthase complex composed of DPH1, DPH2, DPH3 and a NADH-dependent reductase, predominantly CBR1. [4Fe-4S] cluster serves as cofactor.

The protein resides in the cytoplasm. It carries out the reaction L-histidyl-[translation elongation factor 2] + S-adenosyl-L-methionine = 2-[(3S)-amino-3-carboxypropyl]-L-histidyl-[translation elongation factor 2] + S-methyl-5'-thioadenosine + H(+). Its pathway is protein modification; peptidyl-diphthamide biosynthesis. Functionally, catalyzes the first step of diphthamide biosynthesis, a post-translational modification of histidine which occurs in elongation factor 2. DPH1 and DPH2 transfer a 3-amino-3-carboxypropyl (ACP) group from S-adenosyl-L-methionine (SAM) to a histidine residue, the reaction is assisted by a reduction system comprising DPH3 and a NADH-dependent reductase, predominantly CBR1. This Eremothecium gossypii (strain ATCC 10895 / CBS 109.51 / FGSC 9923 / NRRL Y-1056) (Yeast) protein is 2-(3-amino-3-carboxypropyl)histidine synthase subunit 1 (DPH1).